The chain runs to 619 residues: ATP-dependent zinc metalloprotease FtsH (619 aa).

The Cytoplasmic portion of the chain corresponds to 1-5; that stretch reads MKYFK. Residues 6–26 traverse the membrane as a helical segment; it reads GISFYIIIFILILVIITFFTA. The Extracellular segment spans residues 27-110; it reads TDNPPKMSYS…VTQPPQPPWW (84 aa). The helical transmembrane segment at 111-131 threads the bilayer; sequence VSMLPTVGLVIILILIWFFFI. The Cytoplasmic segment spans residues 132-619; sequence QQSQGGGGGN…GSSQTPQLEG (488 aa). 204 to 211 contributes to the ATP binding site; it reads GPPGTGKT. His-426 serves as a coordination point for Zn(2+). The active site involves Glu-427. His-430 and Asp-502 together coordinate Zn(2+).

It in the central section; belongs to the AAA ATPase family. In the C-terminal section; belongs to the peptidase M41 family. As to quaternary structure, homohexamer. The cofactor is Zn(2+).

It is found in the cell membrane. Its function is as follows. Acts as a processive, ATP-dependent zinc metallopeptidase for both cytoplasmic and membrane proteins. Plays a role in the quality control of integral membrane proteins. The chain is ATP-dependent zinc metalloprotease FtsH from Ruminiclostridium cellulolyticum (strain ATCC 35319 / DSM 5812 / JCM 6584 / H10) (Clostridium cellulolyticum).